Reading from the N-terminus, the 113-residue chain is Death-associated protein-like 1.L (113 aa).

A disordered region spans residues 1-57; it reads MAKEQKMQSSPQALKAGHLPAVKAGGMRVSKKQGNEENSAPEKNAKKTLQEKPSSVL.

It belongs to the DAP-DAPL1 family. In terms of assembly, associates with ribosomes; preventing translation. Interacts with eiF5a (eif5a and eif5a2); preventing translation.

Functionally, ribosome-binding protein that promotes ribosome hibernation, a process during which ribosomes are stabilized in an inactive state and preserved from proteasomal degradation. Acts via its association with eiF5a (eif5a and eif5a2) at the polypeptide exit tunnel of the ribosome, preventing mRNA translation. Plays a key role in ribosome hibernation in the mature egg by preventing mRNA translation, leading to ribosome inactivation. Ribosomes, which are produced in large quantities during oogenesis, are stored and translationally repressed in the egg and early embryo. This is Death-associated protein-like 1.L (dapl1.L) from Xenopus laevis (African clawed frog).